The chain runs to 576 residues: D-lactate dehydrogenase [cytochrome], mitochondrial (576 aa).

Residues 139-320 (EANQRPEIVL…TEATIKCHVR (182 aa)) form the FAD-binding PCMH-type domain.

It belongs to the FAD-binding oxidoreductase/transferase type 4 family. It depends on FAD as a cofactor. The cofactor is Zn(2+).

It is found in the mitochondrion matrix. The enzyme catalyses (R)-lactate + 2 Fe(III)-[cytochrome c] = 2 Fe(II)-[cytochrome c] + pyruvate + 2 H(+). Catalyzes the stereospecific oxidation of D-lactate to pyruvate. This chain is D-lactate dehydrogenase [cytochrome], mitochondrial (DLD1), found in Kluyveromyces lactis (strain ATCC 8585 / CBS 2359 / DSM 70799 / NBRC 1267 / NRRL Y-1140 / WM37) (Yeast).